Reading from the N-terminus, the 91-residue chain is C-C motif chemokine 5 (91 aa).

The signal sequence occupies residues Met1 to Ala23. Cystine bridges form between Cys33-Cys57 and Cys34-Cys73.

This sequence belongs to the intercrine beta (chemokine CC) family.

Its subcellular location is the secreted. In terms of biological role, chemoattractant for blood monocytes, memory T-helper cells and eosinophils. Causes the release of histamine from basophils and activates eosinophils. May activate several chemokine receptors including CCR1, CCR3, CCR4 and CCR5. May also be an agonist of the G protein-coupled receptor GPR75. Together with GPR75, may play a role in neuron survival through activation of a downstream signaling pathway involving the PI3, Akt and MAP kinases. By activating GPR75 may also play a role in insulin secretion by islet cells. The sequence is that of C-C motif chemokine 5 (CCL5) from Canis lupus familiaris (Dog).